A 370-amino-acid chain; its full sequence is Histidinol-phosphate aminotransferase 3 (370 aa).

Residue lysine 233 is modified to N6-(pyridoxal phosphate)lysine.

This sequence belongs to the class-II pyridoxal-phosphate-dependent aminotransferase family. Histidinol-phosphate aminotransferase subfamily. As to quaternary structure, homodimer. Pyridoxal 5'-phosphate serves as cofactor.

It catalyses the reaction L-histidinol phosphate + 2-oxoglutarate = 3-(imidazol-4-yl)-2-oxopropyl phosphate + L-glutamate. The protein operates within amino-acid biosynthesis; L-histidine biosynthesis; L-histidine from 5-phospho-alpha-D-ribose 1-diphosphate: step 7/9. This is Histidinol-phosphate aminotransferase 3 from Burkholderia lata (strain ATCC 17760 / DSM 23089 / LMG 22485 / NCIMB 9086 / R18194 / 383).